A 293-amino-acid polypeptide reads, in one-letter code: sn-glycerol-3-phosphate transport system permease protein UgpA (293 aa).

The next 6 membrane-spanning stretches (helical) occupy residues 10-30, 72-92, 108-128, 156-176, 204-224, and 261-281; these read ILPY…FFWP, VTVI…LLLA, MMIM…LFMF, MLLV…LFFV, IVFP…TVYA, and LGSS…LTAF. In terms of domain architecture, ABC transmembrane type-1 spans 66 to 282; that stretch reads YLNSLKVTVI…VIVIALTAFQ (217 aa).

This sequence belongs to the binding-protein-dependent transport system permease family. The complex is composed of two ATP-binding proteins (UgpC), two transmembrane proteins (UgpA and UgpE) and a solute-binding protein (UgpB).

The protein resides in the cell inner membrane. Its function is as follows. Part of the ABC transporter complex UgpBAEC involved in sn-glycerol-3-phosphate (G3P) import. Probably responsible for the translocation of the substrate across the membrane. This is sn-glycerol-3-phosphate transport system permease protein UgpA (ugpA) from Agrobacterium fabrum (strain C58 / ATCC 33970) (Agrobacterium tumefaciens (strain C58)).